Here is a 311-residue protein sequence, read N- to C-terminus: Aspartate carbamoyltransferase catalytic subunit (311 aa).

2 residues coordinate carbamoyl phosphate: Arg58 and Thr59. Lys86 provides a ligand contact to L-aspartate. Arg108, His136, and Gln139 together coordinate carbamoyl phosphate. L-aspartate contacts are provided by Arg169 and Arg223. Residues Gly264 and Pro265 each contribute to the carbamoyl phosphate site.

It belongs to the aspartate/ornithine carbamoyltransferase superfamily. ATCase family. Heterododecamer (2C3:3R2) of six catalytic PyrB chains organized as two trimers (C3), and six regulatory PyrI chains organized as three dimers (R2).

The catalysed reaction is carbamoyl phosphate + L-aspartate = N-carbamoyl-L-aspartate + phosphate + H(+). It functions in the pathway pyrimidine metabolism; UMP biosynthesis via de novo pathway; (S)-dihydroorotate from bicarbonate: step 2/3. Its function is as follows. Catalyzes the condensation of carbamoyl phosphate and aspartate to form carbamoyl aspartate and inorganic phosphate, the committed step in the de novo pyrimidine nucleotide biosynthesis pathway. The polypeptide is Aspartate carbamoyltransferase catalytic subunit (Ruegeria pomeroyi (strain ATCC 700808 / DSM 15171 / DSS-3) (Silicibacter pomeroyi)).